We begin with the raw amino-acid sequence, 606 residues long: Chaperone protein DnaK (606 aa).

T174 is modified (phosphothreonine; by autocatalysis). The segment at 578 to 606 is disordered; the sequence is YTQAGPQGGTNPGGQGGTDGNVNTDYKVY. The span at 583–596 shows a compositional bias: gly residues; the sequence is PQGGTNPGGQGGTD.

Belongs to the heat shock protein 70 family.

Functionally, acts as a chaperone. This Caldicellulosiruptor saccharolyticus (strain ATCC 43494 / DSM 8903 / Tp8T 6331) protein is Chaperone protein DnaK.